A 133-amino-acid polypeptide reads, in one-letter code: Large ribosomal subunit protein bL17 (133 aa).

This sequence belongs to the bacterial ribosomal protein bL17 family. In terms of assembly, part of the 50S ribosomal subunit. Contacts protein L32.

In Nitratidesulfovibrio vulgaris (strain ATCC 29579 / DSM 644 / CCUG 34227 / NCIMB 8303 / VKM B-1760 / Hildenborough) (Desulfovibrio vulgaris), this protein is Large ribosomal subunit protein bL17.